A 147-amino-acid polypeptide reads, in one-letter code: Cilia- and flagella-associated protein 90 (147 aa).

The disordered stretch occupies residues 1 to 36 (MEDDEEETTASTLRGKPRPPPVSAQSAFSYIPPRRL).

As to quaternary structure, microtubule inner protein component of sperm flagellar doublet microtubules.

It localises to the cytoplasm. It is found in the cytoskeleton. The protein resides in the cilium axoneme. Its subcellular location is the flagellum axoneme. In terms of biological role, microtubule inner protein (MIP) part of the dynein-decorated doublet microtubules (DMTs) in cilia axoneme, which is required for motile cilia beating. The polypeptide is Cilia- and flagella-associated protein 90 (Homo sapiens (Human)).